A 344-amino-acid chain; its full sequence is Holliday junction branch migration complex subunit RuvB (344 aa).

Residues 4 to 184 (QDRIIDANAK…FGIVQRLEFY (181 aa)) are large ATPase domain (RuvB-L). ATP is bound by residues Arg-24, Gly-65, Lys-68, Thr-69, Thr-70, 131–133 (EDF), Arg-174, Tyr-184, and Arg-221. Thr-69 provides a ligand contact to Mg(2+). The interval 185–255 (NIEDLTHIVE…IADLALNMLN (71 aa)) is small ATPAse domain (RuvB-S). Residues 258–344 (EHGFDHMDRR…ALKQDSLPGI (87 aa)) are head domain (RuvB-H). Positions 294, 313, and 318 each coordinate DNA.

Belongs to the RuvB family. In terms of assembly, homohexamer. Forms an RuvA(8)-RuvB(12)-Holliday junction (HJ) complex. HJ DNA is sandwiched between 2 RuvA tetramers; dsDNA enters through RuvA and exits via RuvB. An RuvB hexamer assembles on each DNA strand where it exits the tetramer. Each RuvB hexamer is contacted by two RuvA subunits (via domain III) on 2 adjacent RuvB subunits; this complex drives branch migration. In the full resolvosome a probable DNA-RuvA(4)-RuvB(12)-RuvC(2) complex forms which resolves the HJ.

It localises to the cytoplasm. The catalysed reaction is ATP + H2O = ADP + phosphate + H(+). The RuvA-RuvB-RuvC complex processes Holliday junction (HJ) DNA during genetic recombination and DNA repair, while the RuvA-RuvB complex plays an important role in the rescue of blocked DNA replication forks via replication fork reversal (RFR). RuvA specifically binds to HJ cruciform DNA, conferring on it an open structure. The RuvB hexamer acts as an ATP-dependent pump, pulling dsDNA into and through the RuvAB complex. RuvB forms 2 homohexamers on either side of HJ DNA bound by 1 or 2 RuvA tetramers; 4 subunits per hexamer contact DNA at a time. Coordinated motions by a converter formed by DNA-disengaged RuvB subunits stimulates ATP hydrolysis and nucleotide exchange. Immobilization of the converter enables RuvB to convert the ATP-contained energy into a lever motion, pulling 2 nucleotides of DNA out of the RuvA tetramer per ATP hydrolyzed, thus driving DNA branch migration. The RuvB motors rotate together with the DNA substrate, which together with the progressing nucleotide cycle form the mechanistic basis for DNA recombination by continuous HJ branch migration. Branch migration allows RuvC to scan DNA until it finds its consensus sequence, where it cleaves and resolves cruciform DNA. This chain is Holliday junction branch migration complex subunit RuvB, found in Saccharophagus degradans (strain 2-40 / ATCC 43961 / DSM 17024).